Consider the following 441-residue polypeptide: tRNA-2-methylthio-N(6)-dimethylallyladenosine synthase (441 aa).

The MTTase N-terminal domain maps to 5–120 (KLLYIETFGC…LPEMVRAAEQ (116 aa)). Positions 14, 50, 83, 158, 162, and 165 each coordinate [4Fe-4S] cluster. The Radical SAM core domain occupies 144–374 (EGGGVTRFVT…QGLQRDMTIE (231 aa)). Residues 377–439 (AGFVGTCQAV…PNSLLGELAV (63 aa)) enclose the TRAM domain.

This sequence belongs to the methylthiotransferase family. MiaB subfamily. Monomer. [4Fe-4S] cluster serves as cofactor.

It localises to the cytoplasm. It carries out the reaction N(6)-dimethylallyladenosine(37) in tRNA + (sulfur carrier)-SH + AH2 + 2 S-adenosyl-L-methionine = 2-methylsulfanyl-N(6)-dimethylallyladenosine(37) in tRNA + (sulfur carrier)-H + 5'-deoxyadenosine + L-methionine + A + S-adenosyl-L-homocysteine + 2 H(+). In terms of biological role, catalyzes the methylthiolation of N6-(dimethylallyl)adenosine (i(6)A), leading to the formation of 2-methylthio-N6-(dimethylallyl)adenosine (ms(2)i(6)A) at position 37 in tRNAs that read codons beginning with uridine. This chain is tRNA-2-methylthio-N(6)-dimethylallyladenosine synthase, found in Geobacter metallireducens (strain ATCC 53774 / DSM 7210 / GS-15).